The chain runs to 257 residues: Adenosylcobinamide-GDP ribazoletransferase (257 aa).

A run of 7 helical transmembrane segments spans residues 30–50 (IVYF…IGWI), 52–72 (MLLF…VLIT), 109–129 (SLLA…DIIS), 132–152 (SLWV…LLTY), 175–195 (LITA…FIFL), 198–218 (NIVL…IILF), and 237–257 (GIEL…FMFF).

It belongs to the CobS family. Mg(2+) serves as cofactor.

The protein localises to the cell membrane. The catalysed reaction is alpha-ribazole + adenosylcob(III)inamide-GDP = adenosylcob(III)alamin + GMP + H(+). It catalyses the reaction alpha-ribazole 5'-phosphate + adenosylcob(III)inamide-GDP = adenosylcob(III)alamin 5'-phosphate + GMP + H(+). It participates in cofactor biosynthesis; adenosylcobalamin biosynthesis; adenosylcobalamin from cob(II)yrinate a,c-diamide: step 7/7. Functionally, joins adenosylcobinamide-GDP and alpha-ribazole to generate adenosylcobalamin (Ado-cobalamin). Also synthesizes adenosylcobalamin 5'-phosphate from adenosylcobinamide-GDP and alpha-ribazole 5'-phosphate. This Clostridioides difficile (strain 630) (Peptoclostridium difficile) protein is Adenosylcobinamide-GDP ribazoletransferase.